The following is a 219-amino-acid chain: ER lumen protein-retaining receptor (219 aa).

The Lumenal segment spans residues 1-5 (MNPFR). A helical transmembrane segment spans residues 6-26 (ILGDLSHLTSILILIHNIKTT). Residues 27-37 (RYIEGISFKTQ) are Cytoplasmic-facing. The next 2 membrane-spanning stretches (helical) occupy residues 38 to 58 (TLYALVFITRYLDLLTFHWVS) and 59 to 79 (LYNALMKIFFIVSTAYIVVLL). Over 80-98 (QGSKRTNTIAYNEMLMHDT) the chain is Cytoplasmic. A helical transmembrane segment spans residues 99–116 (FKIQHLLIGSALMSVFFH). Residues 117–118 (HK) lie on the Lumenal side of the membrane. Residues 119–139 (FTFLELAWSFSVWLESVAILP) form a helical membrane-spanning segment. Residues 140 to 152 (QLYMLSKGGKTRS) are Cytoplasmic-facing. A helical transmembrane segment spans residues 153–173 (LTVHYIFAMGLYRALYIPNWI). The Lumenal segment spans residues 174-185 (WRYSTEDKKLDK). A helical membrane pass occupies residues 186 to 206 (IAFFAGLLQTLLYSDFFYIYY). The Cytoplasmic portion of the chain corresponds to 207-219 (TKVIRGKGFKLPK).

It belongs to the ERD2 family.

The protein localises to the endoplasmic reticulum membrane. Required for the retention of luminal endoplasmic reticulum proteins. Determines the specificity of the luminal ER protein retention system. Also required for normal vesicular traffic through the Golgi. This receptor strongly recognizes H-D-E-L and weakly recognizes D-D-E-L and K-D-E-L. The chain is ER lumen protein-retaining receptor from Saccharomyces cerevisiae (strain ATCC 204508 / S288c) (Baker's yeast).